A 225-amino-acid polypeptide reads, in one-letter code: Heptaprenylglyceryl phosphate synthase (225 aa).

Residue Lys6 participates in sn-glycerol 1-phosphate binding. Residues Asp8 and Thr34 each contribute to the Mg(2+) site. Sn-glycerol 1-phosphate is bound by residues 153 to 158 (YIEYSG), Gly183, and 203 to 204 (GN).

Belongs to the GGGP/HepGP synthase family. Group I subfamily. In terms of assembly, homodimer. Mg(2+) serves as cofactor.

It catalyses the reaction sn-glycerol 1-phosphate + all-trans-heptaprenyl diphosphate = 3-heptaprenyl-sn-glycero-1-phosphate + diphosphate. It functions in the pathway membrane lipid metabolism; glycerophospholipid metabolism. In terms of biological role, prenyltransferase that catalyzes in vivo the transfer of the heptaprenyl moiety of heptaprenyl pyrophosphate (HepPP; 35 carbon atoms) to the C3 hydroxyl of sn-glycerol-1-phosphate (G1P), producing heptaprenylglyceryl phosphate (HepGP). This reaction is an ether-bond-formation step in the biosynthesis of archaea-type G1P-based membrane lipids found in Bacillales. The sequence is that of Heptaprenylglyceryl phosphate synthase from Listeria welshimeri serovar 6b (strain ATCC 35897 / DSM 20650 / CCUG 15529 / CIP 8149 / NCTC 11857 / SLCC 5334 / V8).